The chain runs to 120 residues: Large ribosomal subunit protein bL12 (120 aa).

This sequence belongs to the bacterial ribosomal protein bL12 family. As to quaternary structure, homodimer. Part of the ribosomal stalk of the 50S ribosomal subunit. Forms a multimeric L10(L12)X complex, where L10 forms an elongated spine to which 2 to 4 L12 dimers bind in a sequential fashion. Binds GTP-bound translation factors.

Functionally, forms part of the ribosomal stalk which helps the ribosome interact with GTP-bound translation factors. Is thus essential for accurate translation. The sequence is that of Large ribosomal subunit protein bL12 from Alkaliphilus metalliredigens (strain QYMF).